The primary structure comprises 349 residues: Phenylalanine--tRNA ligase alpha subunit (349 aa).

Glu-258 is a binding site for Mg(2+).

It belongs to the class-II aminoacyl-tRNA synthetase family. Phe-tRNA synthetase alpha subunit type 1 subfamily. In terms of assembly, tetramer of two alpha and two beta subunits. Requires Mg(2+) as cofactor.

It is found in the cytoplasm. The catalysed reaction is tRNA(Phe) + L-phenylalanine + ATP = L-phenylalanyl-tRNA(Phe) + AMP + diphosphate + H(+). In Rickettsia africae (strain ESF-5), this protein is Phenylalanine--tRNA ligase alpha subunit.